The following is a 486-amino-acid chain: Probable glucan endo-1,3-beta-glucosidase eglC (486 aa).

Residues 1 to 18 form the signal peptide; the sequence is MQLTQLLALALSLATSEA. N-linked (GlcNAc...) asparagine glycosylation is present at asparagine 84. Catalysis depends on glutamate 128, which acts as the Proton donor. N-linked (GlcNAc...) asparagine glycosylation is present at asparagine 183. Glutamate 239 (nucleophile) is an active-site residue. N-linked (GlcNAc...) asparagine glycosylation is found at asparagine 315, asparagine 386, asparagine 396, and asparagine 404. Residues 330-458 are disordered; that stretch reads AAAGGVAGGS…SSGAASPSST (129 aa). Low complexity-rich tracts occupy residues 341-404 and 413-424; these read GSAS…HGSN and SVSNVSPSKSSS. Positions 430 to 442 are enriched in polar residues; that stretch reads AATSMGASPSSVG. Residues 445–458 show a composition bias toward low complexity; the sequence is GPSKSSGAASPSST. A lipid anchor (GPI-anchor amidated glycine) is attached at glycine 463. A propeptide spans 464–486 (removed in mature form); sequence AATSVSAPVVHVVLLALMMVIAA.

The protein belongs to the glycosyl hydrolase 17 family. Post-translationally, the GPI-anchor is attached to the protein in the endoplasmic reticulum and serves to target the protein to the cell surface. There, the glucosamine-inositol phospholipid moiety is cleaved off and the GPI-modified mannoprotein is covalently attached via its lipidless GPI glycan remnant to the 1,6-beta-glucan of the outer cell wall layer.

It localises to the cell membrane. It is found in the secreted. The protein localises to the cell wall. It catalyses the reaction Hydrolysis of (1-&gt;3)-beta-D-glucosidic linkages in (1-&gt;3)-beta-D-glucans.. Glucanases play a role in cell expansion during growth, in cell-cell fusion during mating, and in spore release during sporulation. This enzyme may be involved in beta-glucan degradation and also function biosynthetically as a transglycosylase. The protein is Probable glucan endo-1,3-beta-glucosidase eglC (eglC) of Aspergillus terreus (strain NIH 2624 / FGSC A1156).